The sequence spans 156 residues: D-aminoacyl-tRNA deacylase (156 aa).

The short motif at 142 to 143 is the Gly-cisPro motif, important for rejection of L-amino acids element; sequence GP.

The protein belongs to the DTD family. In terms of assembly, homodimer.

Its subcellular location is the cytoplasm. It carries out the reaction glycyl-tRNA(Ala) + H2O = tRNA(Ala) + glycine + H(+). The enzyme catalyses a D-aminoacyl-tRNA + H2O = a tRNA + a D-alpha-amino acid + H(+). Functionally, an aminoacyl-tRNA editing enzyme that deacylates mischarged D-aminoacyl-tRNAs. Also deacylates mischarged glycyl-tRNA(Ala), protecting cells against glycine mischarging by AlaRS. Acts via tRNA-based rather than protein-based catalysis; rejects L-amino acids rather than detecting D-amino acids in the active site. By recycling D-aminoacyl-tRNA to D-amino acids and free tRNA molecules, this enzyme counteracts the toxicity associated with the formation of D-aminoacyl-tRNA entities in vivo and helps enforce protein L-homochirality. The protein is D-aminoacyl-tRNA deacylase of Delftia acidovorans (strain DSM 14801 / SPH-1).